The primary structure comprises 70 residues: Movement protein TGBp3 (70 aa).

The Lumenal portion of the chain corresponds to 1-4 (MEAG). A helical membrane pass occupies residues 5-27 (AYLNAIIFVLVATIIAVISRGLT). Residues 28 to 70 (RTEPCTIRITGESITVHACHIDSETIKALANLKPLSLERLSFQ) lie on the Cytoplasmic side of the membrane.

It belongs to the Tymovirales TGBp3 protein family.

The protein localises to the host endoplasmic reticulum membrane. Its function is as follows. Plays a role in viral cell-to-cell propagation, by facilitating genome transport to neighboring plant cells through plasmosdesmata. May induce the formation of granular vesicles derived from the Endoplasmic reticulum, which align on actin filaments. The chain is Movement protein TGBp3 from Potato virus X (strain CP) (PVX).